Reading from the N-terminus, the 305-residue chain is UDP-3-O-acyl-N-acetylglucosamine deacetylase (305 aa).

Positions 78, 237, and 241 each coordinate Zn(2+). His264 serves as the catalytic Proton donor.

Belongs to the LpxC family. It depends on Zn(2+) as a cofactor.

It carries out the reaction a UDP-3-O-[(3R)-3-hydroxyacyl]-N-acetyl-alpha-D-glucosamine + H2O = a UDP-3-O-[(3R)-3-hydroxyacyl]-alpha-D-glucosamine + acetate. It functions in the pathway glycolipid biosynthesis; lipid IV(A) biosynthesis; lipid IV(A) from (3R)-3-hydroxytetradecanoyl-[acyl-carrier-protein] and UDP-N-acetyl-alpha-D-glucosamine: step 2/6. In terms of biological role, catalyzes the hydrolysis of UDP-3-O-myristoyl-N-acetylglucosamine to form UDP-3-O-myristoylglucosamine and acetate, the committed step in lipid A biosynthesis. This Paraburkholderia phytofirmans (strain DSM 17436 / LMG 22146 / PsJN) (Burkholderia phytofirmans) protein is UDP-3-O-acyl-N-acetylglucosamine deacetylase.